Here is a 28-residue protein sequence, read N- to C-terminus: Humanin-like 4 (28 aa).

It belongs to the humanin family. Highly expressed in testis. Also expressed in kidney, heart, skeletal muscles and brain.

Its subcellular location is the secreted. It is found in the cytoplasm. Plays a role as a neuroprotective and antiapoptotic factor. The protein is Humanin-like 4 of Homo sapiens (Human).